The chain runs to 244 residues: MAEFNLEALNALPKAEQAAALAVVNGQLEQLSAQERVSWALENLPGDYVLSSSFGIQAAVSLHLVTQQRPDIPVILTDTGYLFPETYQFIDALTEQLKLNLQVYRATESAAWQEARYGKLWEQGVEGIERYNLLNKVEPMNRALSELKAKTWFAGLRREQSGSRGDLPVLAIQRGVFKFLPIIDWDNRTVYQYLKENGLSYHPLWDQGYLSVGDTHTTRKWEPGMSEEETRFFGLKRECGLHEG.

Residue cysteine 239 is the Nucleophile; cysteine thiosulfonate intermediate of the active site.

It belongs to the PAPS reductase family. CysH subfamily.

It is found in the cytoplasm. It carries out the reaction [thioredoxin]-disulfide + sulfite + adenosine 3',5'-bisphosphate + 2 H(+) = [thioredoxin]-dithiol + 3'-phosphoadenylyl sulfate. It participates in sulfur metabolism; hydrogen sulfide biosynthesis; sulfite from sulfate: step 3/3. Its function is as follows. Catalyzes the formation of sulfite from phosphoadenosine 5'-phosphosulfate (PAPS) using thioredoxin as an electron donor. This Pectobacterium carotovorum subsp. carotovorum (strain PC1) protein is Phosphoadenosine 5'-phosphosulfate reductase.